Reading from the N-terminus, the 277-residue chain is Leucine-rich repeat-containing protein 10 (277 aa).

LRR repeat units lie at residues 53-74 (ELVK…LGQL), 76-97 (NLQI…VCTL), 99-120 (QLCI…LSLL), 122-143 (NLRT…VCEL), 145-167 (LLKT…RRLQ), 168-189 (ELRT…LLHM), and 191-212 (FLEV…AHLS).

It localises to the nucleus. Its function is as follows. May play important roles in cardiac development and/or cardiac function. This is Leucine-rich repeat-containing protein 10 (LRRC10) from Homo sapiens (Human).